The following is a 163-amino-acid chain: Thiol peroxidase (163 aa).

One can recognise a Thioredoxin domain in the interval 16–162 (LQVGDKALDF…FEAAIAAAKA (147 aa)). C58 (cysteine sulfenic acid (-SOH) intermediate) is an active-site residue. C58 and C92 are oxidised to a cystine.

The protein belongs to the peroxiredoxin family. Tpx subfamily. As to quaternary structure, homodimer.

The enzyme catalyses a hydroperoxide + [thioredoxin]-dithiol = an alcohol + [thioredoxin]-disulfide + H2O. Functionally, thiol-specific peroxidase that catalyzes the reduction of hydrogen peroxide and organic hydroperoxides to water and alcohols, respectively. Plays a role in cell protection against oxidative stress by detoxifying peroxides. This chain is Thiol peroxidase, found in Streptococcus pneumoniae serotype 2 (strain D39 / NCTC 7466).